A 623-amino-acid chain; its full sequence is Glutathione import ATP-binding protein GsiA (623 aa).

ABC transporter domains lie at 15 to 269 and 314 to 564; these read VENL…RALL and LRVR…RKLL. ATP is bound by residues 49 to 56 and 357 to 364; these read GESGSGKS.

This sequence belongs to the ABC transporter superfamily. Glutathione importer (TC 3.A.1.5.11) family. The complex is composed of two ATP-binding proteins (GsiA), two transmembrane proteins (GsiC and GsiD) and a solute-binding protein (GsiB).

The protein resides in the cell inner membrane. The enzyme catalyses glutathione(out) + ATP + H2O = glutathione(in) + ADP + phosphate + H(+). Functionally, part of the ABC transporter complex GsiABCD involved in glutathione import. Responsible for energy coupling to the transport system. This is Glutathione import ATP-binding protein GsiA from Shigella flexneri.